The following is a 381-amino-acid chain: Magnesium transporter MRS2-I (381 aa).

A run of 2 helical transmembrane segments spans residues 316–336 (LFLS…GIFG) and 353–373 (WVVL…VAYA). The Required for magnesium transport activity motif lies at 336 to 338 (GMN).

Belongs to the CorA metal ion transporter (MIT) (TC 1.A.35.5) family.

It is found in the membrane. Magnesium transporter that may mediate the influx of magnesium. The polypeptide is Magnesium transporter MRS2-I (MRS2-I) (Oryza sativa subsp. indica (Rice)).